The sequence spans 469 residues: Trigger factor (469 aa).

One can recognise a PPIase FKBP-type domain in the interval glycine 166 to proline 245. Residues glycine 430–phenylalanine 469 form a disordered region.

The protein belongs to the FKBP-type PPIase family. Tig subfamily.

It localises to the cytoplasm. It carries out the reaction [protein]-peptidylproline (omega=180) = [protein]-peptidylproline (omega=0). Involved in protein export. Acts as a chaperone by maintaining the newly synthesized protein in an open conformation. Functions as a peptidyl-prolyl cis-trans isomerase. This chain is Trigger factor, found in Arthrobacter sp. (strain FB24).